The sequence spans 352 residues: Ion-translocating oxidoreductase complex subunit D (352 aa).

The next 5 helical transmembrane spans lie at 20-40 (IMLL…WFFG), 42-62 (GTLV…ALVL), 78-109 (ALLT…VIIA), 123-143 (PAMI…TSWL), and 148-168 (IAVN…GHTA). T187 carries the post-translational modification FMN phosphoryl threonine. Helical transmembrane passes span 214–234 (ILAG…GVWL), 242–262 (WHIP…GWLF), 267–287 (LAAP…FFIL), 301–321 (LIFG…GGYP), and 322–342 (DGVA…DYYT).

Belongs to the NqrB/RnfD family. The complex is composed of six subunits: RsxA, RsxB, RsxC, RsxD, RsxE and RsxG. The cofactor is FMN.

It is found in the cell inner membrane. Part of a membrane-bound complex that couples electron transfer with translocation of ions across the membrane. Required to maintain the reduced state of SoxR. The polypeptide is Ion-translocating oxidoreductase complex subunit D (Escherichia coli O6:H1 (strain CFT073 / ATCC 700928 / UPEC)).